The following is a 506-amino-acid chain: Trans-cinnamate 4-monooxygenase C4H1 (506 aa).

2 consecutive short sequence motifs (nuclear localization signal) follow at residues 161 to 168 and 247 to 254; these read VKKMPESA and QRRLQLFK. Cys448 serves as a coordination point for heme.

Belongs to the cytochrome P450 family. The cofactor is heme.

Its subcellular location is the nucleus. The catalysed reaction is (E)-cinnamate + reduced [NADPH--hemoprotein reductase] + O2 = (E)-4-coumarate + oxidized [NADPH--hemoprotein reductase] + H2O + H(+). Its pathway is phenylpropanoid metabolism; trans-4-coumarate biosynthesis; trans-4-coumarate from trans-cinnamate: step 1/1. Functionally, component of the floral volatile benzenoid/phenylpropanoid (FVBP) biosynthetic pathway that controls carbon flux to pigments essential for pollination or UV protection, to numerous pytoalexins synthesized by plants when challenged by pathogens, and to lignins. The sequence is that of Trans-cinnamate 4-monooxygenase C4H1 from Petunia hybrida (Petunia).